The sequence spans 230 residues: 2,3-bisphosphoglycerate-dependent phosphoglycerate mutase (230 aa).

Residues 8-15, 21-22, Arg-60, 87-90, Lys-98, and 114-115 each bind substrate; these read RHGQSIWN, TG, ERHY, and RR. His-9 (tele-phosphohistidine intermediate) is an active-site residue. The active-site Proton donor/acceptor is the Glu-87. The segment at 117 to 143 is disordered; the sequence is YDTPPPALDAEDERHPRHDPRYAGLDP. Positions 128–137 are enriched in basic and acidic residues; sequence DERHPRHDPR. 183–184 lines the substrate pocket; it reads GN.

The protein belongs to the phosphoglycerate mutase family. BPG-dependent PGAM subfamily. As to quaternary structure, homodimer.

The catalysed reaction is (2R)-2-phosphoglycerate = (2R)-3-phosphoglycerate. The protein operates within carbohydrate degradation; glycolysis; pyruvate from D-glyceraldehyde 3-phosphate: step 3/5. Catalyzes the interconversion of 2-phosphoglycerate and 3-phosphoglycerate. This is 2,3-bisphosphoglycerate-dependent phosphoglycerate mutase from Halorhodospira halophila (strain DSM 244 / SL1) (Ectothiorhodospira halophila (strain DSM 244 / SL1)).